A 324-amino-acid chain; its full sequence is CYFIP-related Rac1 interactor B (324 aa).

Glycine 2 is lipidated: N-myristoyl glycine. Lysine 74 participates in a covalent cross-link: Glycyl lysine isopeptide (Lys-Gly) (interchain with G-Cter in ubiquitin).

It belongs to the CYRI family. Interacts with RAC1 (GTP-bound form preferentially). Ubiquitinated at Lys-74 upon Salmonella bacterial infection. In terms of tissue distribution, expressed in pancreatic ducts (at protein level).

Its subcellular location is the membrane. It is found in the mitochondrion. Negatively regulates RAC1 signaling and RAC1-driven cytoskeletal remodeling. Regulates chemotaxis, cell migration and epithelial polarization by controlling the polarity, plasticity, duration and extent of protrusions. Limits Rac1 mediated activation of the Scar/WAVE complex, focuses protrusion signals and regulates pseudopod complexity by inhibiting Scar/WAVE-induced actin polymerization. Protects against Salmonella bacterial infection. Attenuates processes such as macropinocytosis, phagocytosis and cell migration and restrict sopE-mediated bacterial entry. Also restricts infection mediated by Mycobacterium tuberculosis and Listeria monocytogenes. Involved in the regulation of mitochondrial dynamics and oxidative stress. The sequence is that of CYFIP-related Rac1 interactor B (Cyrib) from Mus musculus (Mouse).